The primary structure comprises 71 residues: DNA-directed RNA polymerase subunit epsilon (71 aa).

It belongs to the RNA polymerase subunit epsilon family. RNAP is composed of a core of 2 alpha, a beta and a beta' subunit. The core is associated with a delta subunit, and at least one of epsilon or omega. When a sigma factor is associated with the core the holoenzyme is formed, which can initiate transcription.

It carries out the reaction RNA(n) + a ribonucleoside 5'-triphosphate = RNA(n+1) + diphosphate. A non-essential component of RNA polymerase (RNAP). This Geobacillus thermodenitrificans (strain NG80-2) protein is DNA-directed RNA polymerase subunit epsilon.